A 738-amino-acid polypeptide reads, in one-letter code: Integrin beta-2-like protein (738 aa).

The N-terminal stretch at 1–22 (MLGQCTLLPVLAGLLSLESALS) is a signal peptide. The Extracellular portion of the chain corresponds to 23 to 671 (QLCTKDNVST…LVCAEISNTT (649 aa)). The 51-residue stretch at 24–74 (LCTKDNVSTCQDCIRSGPSCAWCQKLNFTGRGEPDSVRCDTPEQLLLKGCT) folds into the PSI domain. 23 disulfides stabilise this stretch: C25–C419, C33–C43, C36–C73, C46–C62, C218–C258, C358–C372, C421–C439, C431–C442, C444–C453, C455–C486, C469–C484, C478–C489, C491–C506, C508–C531, C513–C529, C521–C534, C536–C545, C547–C570, C554–C568, C562–C573, C575–C584, C594–C603, and C600–C664. N-linked (GlcNAc...) asparagine glycosylation occurs at N29. N-linked (GlcNAc...) asparagine glycans are attached at residues N50, N102, N173, N226, N252, N342, N360, and N386. Residues 126–329 (SVDLYFLMGL…DSSNVAQLIR (204 aa)) enclose the VWFA domain. I-EGF domains are found at residues 421–454 (CQEQ…KNCE), 455–507 (CQTQ…QYCE), 508–546 (CNNV…SACQ), and 547–585 (CRMS…PLCE). N-linked (GlcNAc...) asparagine glycosylation occurs at N473. N-linked (GlcNAc...) asparagine glycosylation is found at N627 and N669. A helical transmembrane segment spans residues 672–692 (ILLGVIVGVLLAVIFLLVYCM). The Cytoplasmic portion of the chain corresponds to 693–738 (VYLKGTQKAAKLPRKGGAQSTLAQQPHFQEPHHVEPVWNQERQGTQ). The interval 709-738 (GAQSTLAQQPHFQEPHHVEPVWNQERQGTQ) is disordered. Polar residues predominate over residues 710 to 719 (AQSTLAQQPH).

Belongs to the integrin beta chain family. As to quaternary structure, monomer and homodimer. Unlike integrin beta chains, no alpha chain partner has yet been found. N-glycosylated. As to expression, expressed predominantly in maturing and mature neutrophils.

Its subcellular location is the cell membrane. Functionally, during inflammatory stimulation, plays a role in retaining Cxcl13-expressing cells at the site of the inflammatory response. In Mus musculus (Mouse), this protein is Integrin beta-2-like protein.